The sequence spans 465 residues: MGKRGRACVVVLGDLGRSPRMQYHALSLARQASFQVDIVAYGGSIPHEAVLNHPSIHIHTMAQPRFIQYFPKILYPVTLLLKAFIQFTMLLWFLFVKVPAPDIFLVQNPPSVPTLIAVKWASSWRRAAFVVDWHNFGYTLLALSLGRNNLLVSLYRWSENHYGKMATGSLCVTKAMQHELDQNWGVRAKVLYDQPPEFFRPALLEERHELFCRVRKDLCHPIGVYDFISRELENQELNETLFTTKFNADISLKQNRPALVVSSTSWTPDENFGILLEAAVMYDRRVAARSKGSETAEISEEQHHYPNLLFIITGKGPEKEMYEEKIKRLNLRHVAFRTMWLAAEDYPLLLGSADLGVCLHTSSSGLDLPMKVVDMFGCGLPVCSVSYSCIQELVKDGKNGLLFSSSSELADQLLILFKGFPGNCDALMSLKAGAMETGSSGRWATEWEDCAKPLITQVVSQIADS.

The Cytoplasmic portion of the chain corresponds to 1-75 (MGKRGRACVV…FIQYFPKILY (75 aa)). Residues 76-96 (PVTLLLKAFIQFTMLLWFLFV) form a helical membrane-spanning segment. The Lumenal segment spans residues 97–465 (KVPAPDIFLV…TQVVSQIADS (369 aa)). N-linked (GlcNAc...) asparagine glycosylation is present at N238.

This sequence belongs to the glycosyltransferase group 1 family. Glycosyltransferase 33 subfamily.

The protein resides in the endoplasmic reticulum membrane. It functions in the pathway protein modification; protein glycosylation. Its function is as follows. Required for pollen tube (PT) growth and integrity by affecting the stability of the pollen-specific ANX1 and ANX2 proteins. Involved in protein N-glycosylation in the endoplasmic reticulum (ER), especially in the female gametophyte. Mediates PT reception in synergids through protein glycosylation. The sequence is that of UDP-glycosyltransferase TURAN from Arabidopsis thaliana (Mouse-ear cress).